The primary structure comprises 103 residues: Large ribosomal subunit protein bL21 (103 aa).

This sequence belongs to the bacterial ribosomal protein bL21 family. As to quaternary structure, part of the 50S ribosomal subunit. Contacts protein L20.

Functionally, this protein binds to 23S rRNA in the presence of protein L20. In Rhodococcus erythropolis (strain PR4 / NBRC 100887), this protein is Large ribosomal subunit protein bL21.